The primary structure comprises 532 residues: Probable pectinesterase/pectinesterase inhibitor 39 (532 aa).

The N-terminal stretch at 1 to 34 (MINNHPIREKPKHIIFNLLSLIFFLIFLSTVVSS) is a signal peptide. The segment at 35-169 (QSPSYTTHKT…ENLKEIILDI (135 aa)) is pectinesterase inhibitor 39. Residues Asn-62, Asn-74, Asn-85, Asn-172, Asn-221, Asn-231, Asn-244, and Asn-287 are each glycosylated (N-linked (GlcNAc...) asparagine). Residues 221 to 518 (NLSVAIDGTG…FTVGPFIDGS (298 aa)) are pectinesterase 39. The substrate site is built by Thr-296 and Gln-326. The active-site Proton donor; for pectinesterase activity is Asp-349. The active-site Nucleophile; for pectinesterase activity is Asp-370. Residues Asn-382 and Asn-404 are each glycosylated (N-linked (GlcNAc...) asparagine). Positions 438 and 440 each coordinate substrate. 2 N-linked (GlcNAc...) asparagine glycosylation sites follow: Asn-502 and Asn-522.

It in the N-terminal section; belongs to the PMEI family. In the C-terminal section; belongs to the pectinesterase family. In terms of tissue distribution, expressed in siliques but not in flower buds.

The protein localises to the secreted. It localises to the cell wall. The catalysed reaction is [(1-&gt;4)-alpha-D-galacturonosyl methyl ester](n) + n H2O = [(1-&gt;4)-alpha-D-galacturonosyl](n) + n methanol + n H(+). It functions in the pathway glycan metabolism; pectin degradation; 2-dehydro-3-deoxy-D-gluconate from pectin: step 1/5. In terms of biological role, acts in the modification of cell walls via demethylesterification of cell wall pectin. The chain is Probable pectinesterase/pectinesterase inhibitor 39 (PME39) from Arabidopsis thaliana (Mouse-ear cress).